A 1813-amino-acid polypeptide reads, in one-letter code: Latent-transforming growth factor beta-binding protein 2 (1813 aa).

Residues 1–35 (MRAPTTARCSGCIQRVRWRGFLPLVLAVLMGTSHA) form the signal peptide. The segment at 94–115 (NPGWLAEAEARRPPRTQQLRRV) is heparin-binding. Residues 103-152 (ARRPPRTQQLRRVQPPVQTRRSHPRGQQQIAARAAPSVARLETPQRPAAA) are disordered. Residues 108–132 (RTQQLRRVQPPVQTRRSHPRGQQQI) are compositionally biased toward polar residues. Asn-175 is a glycosylation site (N-linked (GlcNAc...) asparagine). An EGF-like 1 domain is found at 181–213 (IKPVCQPPCQNRGSCSRPQVCICRSGFRGARCE). Cystine bridges form between Cys-185-Cys-195, Cys-189-Cys-201, and Cys-203-Cys-212. The segment at 220-305 (EFDPQNARPV…QLMSNALPSG (86 aa)) is disordered. A heparin-binding region spans residues 226 to 243 (ARPVPRRSVERAPGPHRS). Residues 257-266 (LVPPPSPPPS) show a composition bias toward pro residues. Residues 293–302 (ANGQLMSNAL) are compositionally biased toward polar residues. Asn-328 carries an N-linked (GlcNAc...) asparagine glycan. 329–339 (LTEKIKKIKVV) serves as a coordination point for heparin. The EGF-like 2 domain occupies 381-413 (RIYFCQIPCLNGGRCIGRDECWCPANSTGKFCH). Intrachain disulfides connect Cys-385–Cys-395, Cys-389–Cys-401, and Cys-403–Cys-412. The N-linked (GlcNAc...) asparagine glycan is linked to Asn-406. At Ser-491 the chain carries Phosphoserine. Positions 492–524 (VETRASHRPHGNLGHSPWASNSIPARAGEAPRP) are disordered. The region spanning 536–588 (GQCYLSTVNGQCANPLGSLTSQEDCCGSVGTFWGVTSCAPCPPRQEGPAFPVI) is the TB 1 domain. Disulfide bonds link Cys-538–Cys-560, Cys-547–Cys-573, and Cys-561–Cys-576. N-linked (GlcNAc...) asparagine glycosylation occurs at Asn-603. Residues 609-649 (DINECLTLGLCKDSECVNTRGSYLCTCRPGLMLDPSRSRCV) form the EGF-like 3; calcium-binding domain. 7 disulfides stabilise this stretch: Cys-613–Cys-624, Cys-619–Cys-633, Cys-635–Cys-648, Cys-661–Cys-683, Cys-670–Cys-696, Cys-684–Cys-699, and Cys-685–Cys-711. Positions 659–711 (GLCYRSLGSGTCTLPLVHRITKQICCCSRVGKAWGSTCEQCPLPGTEAFREIC) constitute a TB 2 domain. Disordered stretches follow at residues 730-761 (KAEEEELASPLREQTEQSTAPPPGQAERQPLR) and 787-819 (SAPHLPARVPGDATGRPAPSLPGQGIPESPAEE). Residues 835 to 877 (DFDPCFAGASNICGPGTCVSLPNGYRCVCSPGYQLHPSQDYCT) form the EGF-like 4 domain. 49 cysteine pairs are disulfide-bonded: Cys-839–Cys-852, Cys-847–Cys-861, Cys-863–Cys-876, Cys-882–Cys-893, Cys-887–Cys-902, Cys-904–Cys-919, Cys-925–Cys-936, Cys-931–Cys-945, Cys-947–Cys-959, Cys-965–Cys-976, Cys-971–Cys-985, Cys-988–Cys-999, Cys-1005–Cys-1016, Cys-1011–Cys-1025, Cys-1027–Cys-1040, Cys-1046–Cys-1057, Cys-1052–Cys-1066, Cys-1069–Cys-1082, Cys-1088–Cys-1099, Cys-1094–Cys-1108, Cys-1111–Cys-1124, Cys-1130–Cys-1142, Cys-1137–Cys-1151, Cys-1153–Cys-1165, Cys-1171–Cys-1183, Cys-1177–Cys-1192, Cys-1194–Cys-1207, Cys-1213–Cys-1224, Cys-1219–Cys-1233, Cys-1235–Cys-1249, Cys-1255–Cys-1268, Cys-1263–Cys-1277, Cys-1281–Cys-1293, Cys-1299–Cys-1311, Cys-1305–Cys-1320, Cys-1322–Cys-1335, Cys-1341–Cys-1353, Cys-1348–Cys-1362, Cys-1364–Cys-1378, Cys-1405–Cys-1428, Cys-1415–Cys-1440, Cys-1429–Cys-1443, Cys-1430–Cys-1455, Cys-1481–Cys-1494, Cys-1489–Cys-1503, Cys-1505–Cys-1518, Cys-1524–Cys-1534, Cys-1529–Cys-1543, and Cys-1545–Cys-1558. Residues 878-920 (DDNECMRNPCEGRGRCVNSVGSYSCLCYPGYTLVTLGDTQECQ) enclose the EGF-like 5; calcium-binding domain. The EGF-like 6; calcium-binding domain maps to 921 to 960 (DIDECEQPGVCSGGRCSNTEGSYHCECDRGYIMVRKGHCQ). Positions 961-1000 (DINECRHPGTCPDGRCVNSPGSYTCLACEEGYVGQSGSCV) constitute an EGF-like 7; calcium-binding domain. In terms of domain architecture, EGF-like 8; calcium-binding spans 1001–1041 (DVNECLTPGICTHGRCINMEGSFRCSCEPGYEVTPDKKGCR). In terms of domain architecture, EGF-like 9; calcium-binding spans 1042–1083 (DVDECASRASCPTGLCLNTEGSFTCSACQSGYWVNEDGTACE). An EGF-like 10; calcium-binding domain is found at 1084 to 1125 (DLDECAFPGVCPTGVCTNTVGSFSCKDCDQGYRPNPLGNRCE). An EGF-like 11; calcium-binding domain is found at 1126-1166 (DVDECEGPQSSCRGGECKNTEGSYQCLCHQGFQLVNGTMCE). Residue Asn-1161 is glycosylated (N-linked (GlcNAc...) asparagine). One can recognise an EGF-like 12; calcium-binding domain in the interval 1167–1208 (DVNECVGEEHCAPHGECLNSLGSFFCLCAPGFASAEGGTRCQ). The region spanning 1209 to 1250 (DVDECAATDPCPGGHCVNTEGSFSCLCETASFQPSPDSGECL) is the EGF-like 13; calcium-binding domain. The EGF-like 14; calcium-binding domain occupies 1251–1294 (DIDECEDREDPVCGAWRCENSPGSYRCILDCQPGFYVAPNGDCI). Positions 1295–1336 (DIDECANDTVCGNHGFCDNTDGSFRCLCDQGFETSPSGWECV) constitute an EGF-like 15; calcium-binding domain. A glycan (N-linked (GlcNAc...) asparagine) is linked at Asn-1301. Residues 1337 to 1379 (DVNECELMMAVCGDALCENVEGSFLCLCASDLEEYDAEEGHCR) enclose the EGF-like 16; calcium-binding domain. Positions 1403 to 1455 (MECYSEHNGGPPCSQILGQNSTQAECCCTQGARWGKACAPCPSEDSVEFSQLC) constitute a TB 3 domain. Residue Asn-1422 is glycosylated (N-linked (GlcNAc...) asparagine). Residues 1477–1519 (DADECVLFGPALCQNGRCSNIVPGYICLCNPGYHYDASSRKCQ) form the EGF-like 17; calcium-binding domain. Residues 1520-1559 (DHNECQDLACENGECVNQEGSFHCLCNPPLTLDLSGQRCV) form the EGF-like 18; calcium-binding domain. N-linked (GlcNAc...) asparagine glycosylation is present at Asn-1560. One can recognise a TB 4 domain in the interval 1576 to 1628 (DICWKKVTNDVCSQPLRGHHTTYTECCCQDGEAWSQQCALCPPRSSEVYAQLC). 4 cysteine pairs are disulfide-bonded: Cys-1578–Cys-1601, Cys-1587–Cys-1613, Cys-1602–Cys-1616, and Cys-1603–Cys-1628. A C-terminal domain region spans residues 1631–1813 (ARIEAERGAG…PGPPHCAAKE (183 aa)). The disordered stretch occupies residues 1671-1717 (YLGPEDTAPEPPFSNPASQPGDNTPVLEPPLQPSELQPHYLASHSEP). The EGF-like 19; calcium-binding domain occupies 1725–1765 (QAEECGILNGCENGRCVRVREGYTCDCFEGFQLDAPTLACV). 6 cysteine pairs are disulfide-bonded: Cys-1729–Cys-1740, Cys-1735–Cys-1749, Cys-1751–Cys-1764, Cys-1770–Cys-1785, Cys-1780–Cys-1794, and Cys-1796–Cys-1809. The 45-residue stretch at 1766–1810 (DVNECEDLNGPARLCAHGHCENTEGSYRCHCSPGYVAEPGPPHCA) folds into the EGF-like 20; calcium-binding domain.

It belongs to the LTBP family. In terms of assembly, forms part of the large latent transforming growth factor beta precursor complex; removal is essential for activation of complex. Interacts with SDC4. Interacts (via C-terminal domain) with FBN1 (via N-terminal domain) in a Ca(+2)-dependent manner. Post-translationally, N-Glycosylated. In terms of processing, contains hydroxylated asparagine residues. As to expression, expressed in the anterior chamber of the eye.

It is found in the secreted. It localises to the extracellular space. Its subcellular location is the extracellular matrix. Functionally, may play an integral structural role in elastic-fiber architectural organization and/or assembly. The chain is Latent-transforming growth factor beta-binding protein 2 (Ltbp2) from Mus musculus (Mouse).